A 266-amino-acid chain; its full sequence is Putative pyruvate, phosphate dikinase regulatory protein (266 aa).

ADP is bound at residue 147-154 (GLSRTSKT).

It belongs to the pyruvate, phosphate/water dikinase regulatory protein family. PDRP subfamily.

It carries out the reaction N(tele)-phospho-L-histidyl/L-threonyl-[pyruvate, phosphate dikinase] + ADP = N(tele)-phospho-L-histidyl/O-phospho-L-threonyl-[pyruvate, phosphate dikinase] + AMP + H(+). It catalyses the reaction N(tele)-phospho-L-histidyl/O-phospho-L-threonyl-[pyruvate, phosphate dikinase] + phosphate + H(+) = N(tele)-phospho-L-histidyl/L-threonyl-[pyruvate, phosphate dikinase] + diphosphate. Its function is as follows. Bifunctional serine/threonine kinase and phosphorylase involved in the regulation of the pyruvate, phosphate dikinase (PPDK) by catalyzing its phosphorylation/dephosphorylation. The protein is Putative pyruvate, phosphate dikinase regulatory protein of Clostridium perfringens (strain 13 / Type A).